A 340-amino-acid chain; its full sequence is Ketol-acid reductoisomerase (NADP(+)) (340 aa).

In terms of domain architecture, KARI N-terminal Rossmann spans valine 2–threonine 181. NADP(+) contacts are provided by residues tyrosine 25–glutamine 28, arginine 48, serine 52, and aspartate 82–glutamine 85. Residue histidine 107 is part of the active site. Residue glycine 133 coordinates NADP(+). The 146-residue stretch at serine 182–isoleucine 327 folds into the KARI C-terminal knotted domain. Residues aspartate 190, glutamate 194, glutamate 226, and glutamate 230 each coordinate Mg(2+). Serine 251 serves as a coordination point for substrate.

It belongs to the ketol-acid reductoisomerase family. Requires Mg(2+) as cofactor.

It catalyses the reaction (2R)-2,3-dihydroxy-3-methylbutanoate + NADP(+) = (2S)-2-acetolactate + NADPH + H(+). The catalysed reaction is (2R,3R)-2,3-dihydroxy-3-methylpentanoate + NADP(+) = (S)-2-ethyl-2-hydroxy-3-oxobutanoate + NADPH + H(+). The protein operates within amino-acid biosynthesis; L-isoleucine biosynthesis; L-isoleucine from 2-oxobutanoate: step 2/4. It functions in the pathway amino-acid biosynthesis; L-valine biosynthesis; L-valine from pyruvate: step 2/4. Involved in the biosynthesis of branched-chain amino acids (BCAA). Catalyzes an alkyl-migration followed by a ketol-acid reduction of (S)-2-acetolactate (S2AL) to yield (R)-2,3-dihydroxy-isovalerate. In the isomerase reaction, S2AL is rearranged via a Mg-dependent methyl migration to produce 3-hydroxy-3-methyl-2-ketobutyrate (HMKB). In the reductase reaction, this 2-ketoacid undergoes a metal-dependent reduction by NADPH to yield (R)-2,3-dihydroxy-isovalerate. In Brevibacillus brevis (strain 47 / JCM 6285 / NBRC 100599), this protein is Ketol-acid reductoisomerase (NADP(+)).